Here is a 1276-residue protein sequence, read N- to C-terminus: Sterol regulatory element-binding protein cleavage-activating protein (1276 aa).

The Cytoplasmic portion of the chain corresponds to 1–18; it reads MTLTERLREKISQAFYNH. The chain crosses the membrane as a helical span at residues 19 to 39; the sequence is GLLCASYPIPIILFTGLCILA. Residues 40-279 lie on the Lumenal side of the membrane; it reads CCYPLLKLPL…NLVHVHFKEE (240 aa). The interval 46 to 284 is loop-1; the sequence is KLPLPGTGPV…HFKEEIGIAE (239 aa). The segment at 60-81 is disordered; the sequence is PVKDYSPPPVDSDHKQGEPSEQ. N263 carries an N-linked (GlcNAc...) asparagine glycan. The chain crosses the membrane as a helical span at residues 280–300; the sequence is IGIAELIPLVTTYIILFAYIY. In terms of domain architecture, SSD spans 284 to 442; it reads ELIPLVTTYI…MFFFTTVLSI (159 aa). Residues 301–312 are Cytoplasmic-facing; sequence FSTRKIDMVKSK. Residues 313-333 form a helical membrane-spanning segment; that stretch reads WGLALAAVVTVLSSLLMSVGL. At 334-344 the chain is on the lumenal side; it reads CTLFGLTPTLN. The chain crosses the membrane as a helical span at residues 345-365; it reads GGEIFPYLVVVIGLENVLVLT. Topologically, residues 366-401 are cytoplasmic; the sequence is KSVVSTPVDLEVKLRIAQGLSSESWSIMKNVATELG. Residues 402–422 form a helical membrane-spanning segment; it reads IILIGYFTLVPAIQEFCLFAV. V423 is a topological domain (lumenal). Residues 424 to 444 traverse the membrane as a helical segment; that stretch reads GLVSDFFLQMFFFTTVLSIDI. Residues 445–518 are Cytoplasmic-facing; the sequence is RRMELADLNK…FLARTRLAQR (74 aa). The short motif at 447–452 is the ER export signal element; that stretch reads MELADL. Glycyl lysine isopeptide (Lys-Gly) (interchain with G-Cter in ubiquitin) cross-links involve residues K454 and K466. The helical transmembrane segment at 519 to 539 threads the bilayer; that stretch reads LIMAGTVVWIGILVYTDPAGL. A loop-7 region spans residues 535-710; that stretch reads DPAGLRTYLA…QAHGDITLYK (176 aa). The Lumenal segment spans residues 540–708; that stretch reads RTYLAAQVTE…GTQAHGDITL (169 aa). N-linked (GlcNAc...) asparagine glycosylation is found at N590 and N641. Residues 709 to 729 traverse the membrane as a helical segment; it reads YKVAALGLAAGIVLVLLLLCL. Topologically, residues 730 to 1276 are cytoplasmic; sequence YRVLCPRNYG…YVPSVLEKLD (547 aa). The segment at 731–1276 is interaction with SREBF2; that stretch reads RVLCPRNYGQ…YVPSVLEKLD (546 aa). The WD 1 repeat unit spans residues 771–811; it reads VLRGHLMDIECLASDGMLLVSCCLAGQVCVWDAQTGDCLTR. A disordered region spans residues 816–903; sequence GSRRDSCGGG…RHRAGCGRAR (88 aa). S821, S837, S843, S850, S905, and S934 each carry phosphoserine. The segment at 928–957 is disordered; it reads PALRPPSPGSPLPQASQEDGAAPEKGSPPL. WD repeat units follow at residues 949-999 and 1002-1039; these read APEK…LCCS and EVSS…SLSP. R1048 carries the omega-N-methylarginine modification. WD repeat units follow at residues 1074–1111, 1114–1152, 1155–1192, and 1194–1232; these read AHQK…CLFT, GHSG…RVSH, AHRG…KLYS, and QQDL…LLQT.

Belongs to the WD repeat SCAP family. As to quaternary structure, membrane region forms a homotetramer. Component of the SCAP-SREBP complex (composed of SCAP and SREBF1/SREBP1 or SREBF2/SREBP2); interacts with SREBF1/SREBP1 or SREBF2/SREBP2 through its C-terminal cytoplasmic domain. Forms a ternary complex with INSIG1 or INSIG2 through its transmembrane domains at high sterol concentrations. Interacts with PAQR3; the interaction anchors the SCAP-SREBP complex to the Golgi apparatus in low cholesterol conditions. Interacts with the SEC23-SEC24 complex in a SAR1-GTP-dependent manner through an ER export signal in its third cytoplasmic loop. Interacts with RNF139; the interaction inhibits the interaction of SCAP with SEC24B and hampering the ER to Golgi transport of the SCAP-SREBP complex. Interacts with SPRING. Post-translationally, ubiquitinated at Lys-454 and Lys-466. RNF145 triggers ubiquitination of SCAP, likely inhibiting SCAP-SREBP complex transport to the Golgi apparatus and the subsequent processing/maturation of SREBF2/SREBP2.

Its subcellular location is the endoplasmic reticulum membrane. The protein resides in the golgi apparatus membrane. It localises to the cytoplasmic vesicle. It is found in the COPII-coated vesicle membrane. Its function is as follows. Escort protein required for cholesterol as well as lipid homeostasis. Regulates export of the SCAP-SREBP complex from the endoplasmic reticulum to the Golgi upon low cholesterol, thereby regulating the processing of sterol regulatory element-binding proteins (SREBPs) SREBF1/SREBP1 and SREBF2/SREBP2. At high sterol concentrations, formation of a ternary complex with INSIG (INSIG1 or INSIG2) leads to mask the ER export signal in SCAP, promoting retention of the complex in the endoplasmic reticulum. Low sterol concentrations trigger release of INSIG, a conformational change in the SSD domain of SCAP, unmasking of the ER export signal, promoting recruitment into COPII-coated vesicles and transport of the SCAP-SREBP to the Golgi: in the Golgi, SREBPs are then processed, releasing the transcription factor fragment of SREBPs from the membrane, its import into the nucleus and up-regulation of LDLR, INSIG1 and the mevalonate pathway. Binds cholesterol via its SSD domain. The sequence is that of Sterol regulatory element-binding protein cleavage-activating protein from Cricetulus griseus (Chinese hamster).